Reading from the N-terminus, the 176-residue chain is NAD(P)H-quinone oxidoreductase subunit 6, chloroplastic (176 aa).

5 helical membrane-spanning segments follow: residues 10 to 30 (FLLVFLGSGLILGGLGVVLLP), 33 to 53 (IYSAFSLGFVLVCISLFYILL), 61 to 81 (AQLLIYVGAINVLIIFAVMFM), 92 to 112 (LWTIGDGVTSVVCTGLFISLI), and 152 to 172 (FFLPFELVSIILLVALIGAIA).

This sequence belongs to the complex I subunit 6 family. NDH is composed of at least 16 different subunits, 5 of which are encoded in the nucleus.

The protein resides in the plastid. It is found in the chloroplast thylakoid membrane. It carries out the reaction a plastoquinone + NADH + (n+1) H(+)(in) = a plastoquinol + NAD(+) + n H(+)(out). It catalyses the reaction a plastoquinone + NADPH + (n+1) H(+)(in) = a plastoquinol + NADP(+) + n H(+)(out). Its function is as follows. NDH shuttles electrons from NAD(P)H:plastoquinone, via FMN and iron-sulfur (Fe-S) centers, to quinones in the photosynthetic chain and possibly in a chloroplast respiratory chain. The immediate electron acceptor for the enzyme in this species is believed to be plastoquinone. Couples the redox reaction to proton translocation, and thus conserves the redox energy in a proton gradient. The chain is NAD(P)H-quinone oxidoreductase subunit 6, chloroplastic (ndhG) from Coffea arabica (Arabian coffee).